Consider the following 70-residue polypeptide: Large ribosomal subunit protein uL29 (70 aa).

It belongs to the universal ribosomal protein uL29 family.

The sequence is that of Large ribosomal subunit protein uL29 from Prochlorococcus marinus (strain MIT 9303).